Reading from the N-terminus, the 202-residue chain is Small ribosomal subunit protein uS4 (202 aa).

One can recognise an S4 RNA-binding domain in the interval Ser91 to Asp168.

This sequence belongs to the universal ribosomal protein uS4 family. Part of the 30S ribosomal subunit. Contacts protein S5. The interaction surface between S4 and S5 is involved in control of translational fidelity.

In terms of biological role, one of the primary rRNA binding proteins, it binds directly to 16S rRNA where it nucleates assembly of the body of the 30S subunit. With S5 and S12 plays an important role in translational accuracy. The protein is Small ribosomal subunit protein uS4 of Ehrlichia chaffeensis (strain ATCC CRL-10679 / Arkansas).